The chain runs to 259 residues: Undecaprenyl-diphosphatase 3 (259 aa).

The next 8 helical transmembrane spans lie at 1–21, 39–59, 71–91, 99–119, 133–153, 174–194, 208–228, and 239–259; these read MNWL…FLPI, AGLF…FIYY, FSKL…IGLL, ISKT…FLYM, ITYK…FPAI, AYFS…LQFV, SLIV…SWMI, and FAYY…TDVF.

It belongs to the UppP family.

The protein localises to the cell membrane. The enzyme catalyses di-trans,octa-cis-undecaprenyl diphosphate + H2O = di-trans,octa-cis-undecaprenyl phosphate + phosphate + H(+). Its function is as follows. Catalyzes the dephosphorylation of undecaprenyl diphosphate (UPP). Confers resistance to bacitracin. In Bacillus cereus (strain ATCC 14579 / DSM 31 / CCUG 7414 / JCM 2152 / NBRC 15305 / NCIMB 9373 / NCTC 2599 / NRRL B-3711), this protein is Undecaprenyl-diphosphatase 3.